Reading from the N-terminus, the 410-residue chain is Metal tolerance protein 3 (410 aa).

The tract at residues 1 to 58 is disordered; sequence MDGDDRRTPLLGGEGGSTRPPSLRRRDSARSLRSTFLSRLPDKVRGGGDPERPAADVD. Residues 1–114 lie on the Cytoplasmic side of the membrane; it reads MDGDDRRTPL…EDKEQKQSES (114 aa). Positions 40–58 are enriched in basic and acidic residues; the sequence is LPDKVRGGGDPERPAADVD. A helical membrane pass occupies residues 115–135; sequence AMKISNYANIILLVFKVYATI. The Vacuolar portion of the chain corresponds to 136–140; the sequence is KTGSM. The helical transmembrane segment at 141–161 threads the bilayer; sequence AIAASTLDSLLDFLAGGILYF. The Cytoplasmic segment spans residues 162-184; the sequence is THLTMKSVNIYKYPIGKLRVQPV. The helical transmembrane segment at 185 to 205 threads the bilayer; the sequence is GIIVFAAIMATLGFQVLIQAI. The Vacuolar segment spans residues 206–221; it reads EQLVENKAGEKMTPEQ. The chain crosses the membrane as a helical span at residues 222 to 242; that stretch reads LIWLYSIMLSATVVKLALYIY. Residues 243 to 258 are Cytoplasmic-facing; the sequence is CRSSGNSIVQAYAKDH. Residues 259–275 traverse the membrane as a helical segment; sequence YFDVVTNVVGLVAAVLG. Over 276-284 the chain is Vacuolar; that stretch reads DKFFWWIDP. Residues 285–303 form a helical membrane-spanning segment; the sequence is VGAVLLAVYTIVNWSGTVY. The Cytoplasmic segment spans residues 304 to 410; the sequence is ENAVTLVGQC…VRSRLPSTEP (107 aa).

It belongs to the cation diffusion facilitator (CDF) transporter (TC 2.A.4) family. SLC30A subfamily.

The protein localises to the vacuole membrane. Its function is as follows. Involved in sequestration of excess metal in the cytoplasm into vacuoles to maintain metal homeostasis. This Oryza sativa subsp. japonica (Rice) protein is Metal tolerance protein 3 (MTP3).